A 280-amino-acid chain; its full sequence is UPF0276 protein CC_2906 (280 aa).

It belongs to the UPF0276 family.

In Caulobacter vibrioides (strain ATCC 19089 / CIP 103742 / CB 15) (Caulobacter crescentus), this protein is UPF0276 protein CC_2906.